The chain runs to 159 residues: MKIRIGHGFDVHKFGEARPLILCGVEVPYETGLVAHSDGDVVLHAISDAILGAMALGDIGKHFPDTDAAYKGADSRVLLRHCYALARAKGFELGNLDVTIIAQAPKMAPHIEDMRQVLAADLNADIADINVKATTTEKLGFTGRKEGIAVEAVVLLSRQ.

A divalent metal cation-binding residues include D10 and H12. Residues 10-12 (DVH) and 36-37 (HS) contribute to the 4-CDP-2-C-methyl-D-erythritol 2-phosphate site. Residue H44 participates in a divalent metal cation binding. 4-CDP-2-C-methyl-D-erythritol 2-phosphate is bound by residues 58–60 (DIG), 63–67 (FPDTD), 102–108 (AQAPKMA), 134–137 (TTTE), F141, and R144.

It belongs to the IspF family. Homotrimer. It depends on a divalent metal cation as a cofactor.

It carries out the reaction 4-CDP-2-C-methyl-D-erythritol 2-phosphate = 2-C-methyl-D-erythritol 2,4-cyclic diphosphate + CMP. It functions in the pathway isoprenoid biosynthesis; isopentenyl diphosphate biosynthesis via DXP pathway; isopentenyl diphosphate from 1-deoxy-D-xylulose 5-phosphate: step 4/6. In terms of biological role, involved in the biosynthesis of isopentenyl diphosphate (IPP) and dimethylallyl diphosphate (DMAPP), two major building blocks of isoprenoid compounds. Catalyzes the conversion of 4-diphosphocytidyl-2-C-methyl-D-erythritol 2-phosphate (CDP-ME2P) to 2-C-methyl-D-erythritol 2,4-cyclodiphosphate (ME-CPP) with a corresponding release of cytidine 5-monophosphate (CMP). This is 2-C-methyl-D-erythritol 2,4-cyclodiphosphate synthase from Shewanella sp. (strain ANA-3).